A 474-amino-acid polypeptide reads, in one-letter code: Sestrin homolog (474 aa).

Belongs to the sestrin family.

The protein localises to the nucleus. It localises to the cytoplasm. May function as a negative feedback regulator of TOR function. This is Sestrin homolog from Caenorhabditis elegans.